A 182-amino-acid chain; its full sequence is Large ribosomal subunit protein uL5 (182 aa).

Belongs to the universal ribosomal protein uL5 family. Part of the 50S ribosomal subunit; part of the 5S rRNA/L5/L18/L25 subcomplex. Contacts the 5S rRNA and the P site tRNA. Forms a bridge to the 30S subunit in the 70S ribosome.

Functionally, this is one of the proteins that bind and probably mediate the attachment of the 5S RNA into the large ribosomal subunit, where it forms part of the central protuberance. In the 70S ribosome it contacts protein S13 of the 30S subunit (bridge B1b), connecting the 2 subunits; this bridge is implicated in subunit movement. Contacts the P site tRNA; the 5S rRNA and some of its associated proteins might help stabilize positioning of ribosome-bound tRNAs. The protein is Large ribosomal subunit protein uL5 of Mycoplasma mobile (strain ATCC 43663 / 163K / NCTC 11711) (Mesomycoplasma mobile).